We begin with the raw amino-acid sequence, 304 residues long: MDYQAILETIHRDIQPWLGKGRVADYIPELAKASATDFGMAIVTPRGEVFRVGQAETLFSIQSISKLFACTLAFQLEGESLWQRVGREPSGNAFNSLVQLEHENGIPRNPFINAGALVVTDVLCRRFVQAETAMVQFMRRLVDNPRVDYNPRVALSELEHADRNRAMAHFMRSFGNLHMPVETVIDAYCRQCAIEMHCVDLARAVLFLANGGVVPWSGERVIETSPAKRLSALMLTCGTYDAAGDFVYRVGLPAKSGVGGGIVAVLPGEFGVCVWSPGLDVSGNSLAGLQALEWLTTLSGRSIF.

Ser-63, Asn-113, Glu-157, Asn-164, Tyr-188, Tyr-240, and Val-258 together coordinate substrate.

It belongs to the glutaminase family. Homotetramer.

It carries out the reaction L-glutamine + H2O = L-glutamate + NH4(+). This is Glutaminase from Ralstonia nicotianae (strain ATCC BAA-1114 / GMI1000) (Ralstonia solanacearum).